The primary structure comprises 64 residues: Large ribosomal subunit protein uL30 (64 aa).

The protein belongs to the universal ribosomal protein uL30 family. In terms of assembly, part of the 50S ribosomal subunit.

This chain is Large ribosomal subunit protein uL30, found in Methylorubrum populi (strain ATCC BAA-705 / NCIMB 13946 / BJ001) (Methylobacterium populi).